The primary structure comprises 280 residues: Homeobox protein Hox-B1b (280 aa).

A disordered region spans residues 46–65 (GRLAAPTSAPHQSPGLPLHH). The Antp-type hexapeptide motif lies at 170 to 175 (TFDWMK). Positions 195–254 (HNVIRTNFTTKQLTELEKEFHFNKYLTRARRVEVAASLELNETQVKIWFQNRRMKQKKRE) form a DNA-binding region, homeobox. Residues 249–280 (KQKKREKLGGVLVHREKASGPESSPKAKESEP) are disordered. A compositionally biased stretch (basic and acidic residues) spans 261–280 (VHREKASGPESSPKAKESEP).

This sequence belongs to the Antp homeobox family. Labial subfamily.

It localises to the nucleus. Its function is as follows. Sequence-specific transcription factor which is part of a developmental regulatory system that provides cells with specific positional identities on the anterior-posterior axis. This chain is Homeobox protein Hox-B1b (hoxb1b), found in Takifugu rubripes (Japanese pufferfish).